The following is a 383-amino-acid chain: Succinyl-diaminopimelate desuccinylase (383 aa).

Residue His70 coordinates Zn(2+). Residue Asp72 is part of the active site. Asp103 contributes to the Zn(2+) binding site. Glu137 acts as the Proton acceptor in catalysis. Zn(2+) contacts are provided by Glu138, Glu166, and His352.

It belongs to the peptidase M20A family. DapE subfamily. In terms of assembly, homodimer. Zn(2+) is required as a cofactor. The cofactor is Co(2+).

It carries out the reaction N-succinyl-(2S,6S)-2,6-diaminopimelate + H2O = (2S,6S)-2,6-diaminopimelate + succinate. It participates in amino-acid biosynthesis; L-lysine biosynthesis via DAP pathway; LL-2,6-diaminopimelate from (S)-tetrahydrodipicolinate (succinylase route): step 3/3. Catalyzes the hydrolysis of N-succinyl-L,L-diaminopimelic acid (SDAP), forming succinate and LL-2,6-diaminopimelate (DAP), an intermediate involved in the bacterial biosynthesis of lysine and meso-diaminopimelic acid, an essential component of bacterial cell walls. The protein is Succinyl-diaminopimelate desuccinylase of Hahella chejuensis (strain KCTC 2396).